The following is a 103-amino-acid chain: Urease subunit gamma (103 aa).

Belongs to the urease gamma subunit family. In terms of assembly, heterotrimer of UreA (gamma), UreB (beta) and UreC (alpha) subunits. Three heterotrimers associate to form the active enzyme.

Its subcellular location is the cytoplasm. It catalyses the reaction urea + 2 H2O + H(+) = hydrogencarbonate + 2 NH4(+). It functions in the pathway nitrogen metabolism; urea degradation; CO(2) and NH(3) from urea (urease route): step 1/1. This Paracoccus denitrificans (strain Pd 1222) protein is Urease subunit gamma.